The following is a 238-amino-acid chain: MSSVEGMAQSIRSGTEPVRVQWLGRIDYQAAWDLQRELAEERIAGGPDSLLLLEHPEVYTAGRRTLAHERPVDGTPVIDTDRGGKITWHGPGQLVGYPIIGLAEPLDVVNFVRRLEESLISVCASFGVQTGRVEGRSGVWVAGDGGRPDRKIAAIGIRVARATTLHGFAINCDCDLGAFGSIVPCGIADAGVTSLTAELGRTVGVAEVIDRVSEAVLDALDGRIALGVASSPGVDSAQ.

The BPL/LPL catalytic domain occupies 44–224; that stretch reads AGGPDSLLLL…AVLDALDGRI (181 aa). Substrate contacts are provided by residues 82–89, 154–156, and 167–169; these read RGGKITWH, AIG, and GFA. C185 (acyl-thioester intermediate) is an active-site residue.

This sequence belongs to the LipB family.

Its subcellular location is the cytoplasm. It carries out the reaction octanoyl-[ACP] + L-lysyl-[protein] = N(6)-octanoyl-L-lysyl-[protein] + holo-[ACP] + H(+). It participates in protein modification; protein lipoylation via endogenous pathway; protein N(6)-(lipoyl)lysine from octanoyl-[acyl-carrier-protein]: step 1/2. Functionally, catalyzes the transfer of endogenously produced octanoic acid from octanoyl-acyl-carrier-protein onto the lipoyl domains of lipoate-dependent enzymes. Lipoyl-ACP can also act as a substrate although octanoyl-ACP is likely to be the physiological substrate. The protein is Octanoyltransferase of Mycolicibacterium gilvum (strain PYR-GCK) (Mycobacterium gilvum (strain PYR-GCK)).